Reading from the N-terminus, the 146-residue chain is UPF0178 protein BcerKBAB4_2842 (146 aa).

It belongs to the UPF0178 family.

The chain is UPF0178 protein BcerKBAB4_2842 from Bacillus mycoides (strain KBAB4) (Bacillus weihenstephanensis).